The primary structure comprises 222 residues: Putative O-methyltransferase MAV_1364 (222 aa).

Residues Val49, Glu71, 73-74, Ser79, Asp97, and Ile98 contribute to the S-adenosyl-L-methionine site; that span reads GT. Position 145 (Asp145) interacts with substrate. Asp147 lines the S-adenosyl-L-methionine pocket.

The protein belongs to the class I-like SAM-binding methyltransferase superfamily. Cation-dependent O-methyltransferase family.

The chain is Putative O-methyltransferase MAV_1364 from Mycobacterium avium (strain 104).